Reading from the N-terminus, the 823-residue chain is Leucine--tRNA ligase (823 aa).

Positions 55-65 (PYPSGNLHIGH) match the 'HIGH' region motif. Residues 590 to 594 (KMSKS) carry the 'KMSKS' region motif. Lys-593 is an ATP binding site.

It belongs to the class-I aminoacyl-tRNA synthetase family.

The protein localises to the cytoplasm. It carries out the reaction tRNA(Leu) + L-leucine + ATP = L-leucyl-tRNA(Leu) + AMP + diphosphate. This is Leucine--tRNA ligase from Deinococcus radiodurans (strain ATCC 13939 / DSM 20539 / JCM 16871 / CCUG 27074 / LMG 4051 / NBRC 15346 / NCIMB 9279 / VKM B-1422 / R1).